The chain runs to 236 residues: Small ribosomal subunit protein uS2c (236 aa).

This sequence belongs to the universal ribosomal protein uS2 family.

It localises to the plastid. It is found in the chloroplast. This is Small ribosomal subunit protein uS2c (rps2) from Ipomoea purpurea (Common morning glory).